The sequence spans 421 residues: D-inositol 3-phosphate glycosyltransferase (421 aa).

His13 contacts 1D-myo-inositol 3-phosphate. UDP-N-acetyl-alpha-D-glucosamine-binding positions include 19–20 and Gly27; that span reads QP. 1D-myo-inositol 3-phosphate contacts are provided by residues 24-29, Lys82, Tyr115, Thr139, and Arg159; that span reads DAGGMN. The UDP-N-acetyl-alpha-D-glucosamine site is built by Arg233, Lys238, and Val294. Residues Phe303, Arg304, and Ala306 each contribute to the Mg(2+) site. Positions 316 and 324 each coordinate UDP-N-acetyl-alpha-D-glucosamine. Residue Thr330 coordinates Mg(2+).

The protein belongs to the glycosyltransferase group 1 family. MshA subfamily. As to quaternary structure, homodimer.

The enzyme catalyses 1D-myo-inositol 3-phosphate + UDP-N-acetyl-alpha-D-glucosamine = 1D-myo-inositol 2-acetamido-2-deoxy-alpha-D-glucopyranoside 3-phosphate + UDP + H(+). Catalyzes the transfer of a N-acetyl-glucosamine moiety to 1D-myo-inositol 3-phosphate to produce 1D-myo-inositol 2-acetamido-2-deoxy-glucopyranoside 3-phosphate in the mycothiol biosynthesis pathway. The polypeptide is D-inositol 3-phosphate glycosyltransferase (Arthrobacter sp. (strain FB24)).